Reading from the N-terminus, the 456-residue chain is MELNSLTAISPIDGRYSNSTKLLRNIFSEFGFLKYRLYVEIQWLKKLINMHQILEIKKVEKTDILFLDNIFETFNEEDAISVKNIEKETNHDVKALEYFLRKKLSQSKKLSPFLEFVHFLCTSEDINNIAYALMIKNARDEIILPLWKKIINFLKNASFQYRNNSLLSLTHGQPATPSTMGKEMVNFYYRMQRQYHKLKKIEILGKINGTTGNYNAHLVAYPKVNWHAVSKEFITSLGIFWNPYTTQIEPHDYIAELFGCVSLFNNILIDSNRDIWGYISLNYFKQKLIDQEIGSSIMPHKINPIDFENSEGNLGLSNALMNHMINKLPISRWQRDLSDSTVLRNIGVVFAYSIIAYNSVLLGTNKLTINTSQLLKNLDNNWSVLSEAIQTVMRRYTIENAYEKLKKLTRGKKIEKVDIHKFIDKLNIPKIEKERLKKISPSNYIGAASQIIDEIK.

Residues 15 to 16 (RY), 90 to 92 (NHD), and 122 to 123 (TS) each bind N(6)-(1,2-dicarboxyethyl)-AMP. Catalysis depends on histidine 171, which acts as the Proton donor/acceptor. Glutamine 247 provides a ligand contact to N(6)-(1,2-dicarboxyethyl)-AMP. Serine 295 serves as the catalytic Proton donor/acceptor. Residues serine 296, 301–303 (KIN), asparagine 309, arginine 335, and 340–344 (STVLR) contribute to the N(6)-(1,2-dicarboxyethyl)-AMP site.

The protein belongs to the lyase 1 family. Adenylosuccinate lyase subfamily. As to quaternary structure, homotetramer. Residues from neighboring subunits contribute catalytic and substrate-binding residues to each active site.

It carries out the reaction N(6)-(1,2-dicarboxyethyl)-AMP = fumarate + AMP. The enzyme catalyses (2S)-2-[5-amino-1-(5-phospho-beta-D-ribosyl)imidazole-4-carboxamido]succinate = 5-amino-1-(5-phospho-beta-D-ribosyl)imidazole-4-carboxamide + fumarate. It functions in the pathway purine metabolism; AMP biosynthesis via de novo pathway; AMP from IMP: step 2/2. The protein operates within purine metabolism; IMP biosynthesis via de novo pathway; 5-amino-1-(5-phospho-D-ribosyl)imidazole-4-carboxamide from 5-amino-1-(5-phospho-D-ribosyl)imidazole-4-carboxylate: step 2/2. Functionally, catalyzes two reactions in de novo purine nucleotide biosynthesis. Catalyzes the breakdown of 5-aminoimidazole- (N-succinylocarboxamide) ribotide (SAICAR or 2-[5-amino-1-(5-phospho-beta-D-ribosyl)imidazole-4-carboxamido]succinate) to 5-aminoimidazole-4-carboxamide ribotide (AICAR or 5-amino-1-(5-phospho-beta-D-ribosyl)imidazole-4-carboxamide) and fumarate, and of adenylosuccinate (ADS or N(6)-(1,2-dicarboxyethyl)-AMP) to adenosine monophosphate (AMP) and fumarate. The sequence is that of Adenylosuccinate lyase (purB) from Buchnera aphidicola subsp. Schizaphis graminum (strain Sg).